The following is a 219-amino-acid chain: Translation initiation factor IF-3 (219 aa).

It belongs to the IF-3 family. As to quaternary structure, monomer.

The protein localises to the cytoplasm. IF-3 binds to the 30S ribosomal subunit and shifts the equilibrium between 70S ribosomes and their 50S and 30S subunits in favor of the free subunits, thus enhancing the availability of 30S subunits on which protein synthesis initiation begins. The protein is Translation initiation factor IF-3 of Prochlorococcus marinus (strain MIT 9303).